The primary structure comprises 171 residues: 3-hydroxydecanoyl-[acyl-carrier-protein] dehydratase (171 aa).

His-70 is a catalytic residue.

It belongs to the thioester dehydratase family. FabA subfamily. Homodimer.

It localises to the cytoplasm. It carries out the reaction a (3R)-hydroxyacyl-[ACP] = a (2E)-enoyl-[ACP] + H2O. It catalyses the reaction (3R)-hydroxydecanoyl-[ACP] = (2E)-decenoyl-[ACP] + H2O. The catalysed reaction is (2E)-decenoyl-[ACP] = (3Z)-decenoyl-[ACP]. It participates in lipid metabolism; fatty acid biosynthesis. In terms of biological role, necessary for the introduction of cis unsaturation into fatty acids. Catalyzes the dehydration of (3R)-3-hydroxydecanoyl-ACP to E-(2)-decenoyl-ACP and then its isomerization to Z-(3)-decenoyl-ACP. Can catalyze the dehydratase reaction for beta-hydroxyacyl-ACPs with saturated chain lengths up to 16:0, being most active on intermediate chain length. This Stutzerimonas stutzeri (strain A1501) (Pseudomonas stutzeri) protein is 3-hydroxydecanoyl-[acyl-carrier-protein] dehydratase.